A 351-amino-acid chain; its full sequence is N6-Methyl-AMP deaminase (351 aa).

Histidine 23 and histidine 25 together coordinate Zn(2+). Residues histidine 25, asparagine 27, histidine 73, serine 105 to arginine 108, aspartate 147, and glycine 180 each bind N(6)-methyl-AMP. Histidine 207 is a binding site for Zn(2+). Positions 210, 292, and 293 each coordinate N(6)-methyl-AMP. Catalysis depends on glutamate 210, which acts as the Proton donor. Residue aspartate 292 participates in Zn(2+) binding.

Belongs to the metallo-dependent hydrolases superfamily. Adenosine and AMP deaminases family. Monomer. The cofactor is Zn(2+).

It carries out the reaction N(6)-methyl-AMP + H2O + H(+) = IMP + methylamine. Catalyzes the hydrolysis of the free cytosolic methylated adenosine nucleotide N(6)-methyl-AMP (N6-mAMP) to produce inositol monophosphate (IMP) and methylamine. Is required for the catabolism of cytosolic N6-mAMP, which is derived from the degradation of mRNA containing N6-methylated adenine (m6A). The sequence is that of N6-Methyl-AMP deaminase from Bos taurus (Bovine).